The sequence spans 64 residues: Conotoxin Cal6.26 (64 aa).

The N-terminal stretch at 1–22 is a signal peptide; sequence MKLTCVMIVAVLVLTVCKVVTS. 3 cysteine pairs are disulfide-bonded: C32–C50, C40–C54, and C49–C60.

In terms of tissue distribution, expressed by the venom duct.

It is found in the secreted. Its function is as follows. Probable neurotoxin. The chain is Conotoxin Cal6.26 from Californiconus californicus (California cone).